We begin with the raw amino-acid sequence, 326 residues long: Phospho-N-acetylmuramoyl-pentapeptide-transferase (326 aa).

10 helical membrane-spanning segments follow: residues 2 to 22 (ILAT…FPYF), 51 to 71 (VPPM…LLWA), 73 to 93 (LTPE…LGFI), 113 to 133 (ILIQ…YSAE), 143 to 163 (GVII…IVGS), 175 to 195 (GLAA…AYIT), 199 to 219 (MNIT…LWFN), 225 to 245 (IFMG…TSVL), 250 to 270 (MLFA…IIQI), and 305 to 325 (VIVM…ITFL).

This sequence belongs to the glycosyltransferase 4 family. MraY subfamily. Mg(2+) serves as cofactor.

The protein localises to the cell membrane. The enzyme catalyses UDP-N-acetyl-alpha-D-muramoyl-L-alanyl-gamma-D-glutamyl-meso-2,6-diaminopimeloyl-D-alanyl-D-alanine + di-trans,octa-cis-undecaprenyl phosphate = di-trans,octa-cis-undecaprenyl diphospho-N-acetyl-alpha-D-muramoyl-L-alanyl-D-glutamyl-meso-2,6-diaminopimeloyl-D-alanyl-D-alanine + UMP. It participates in cell wall biogenesis; peptidoglycan biosynthesis. Functionally, catalyzes the initial step of the lipid cycle reactions in the biosynthesis of the cell wall peptidoglycan: transfers peptidoglycan precursor phospho-MurNAc-pentapeptide from UDP-MurNAc-pentapeptide onto the lipid carrier undecaprenyl phosphate, yielding undecaprenyl-pyrophosphoryl-MurNAc-pentapeptide, known as lipid I. The polypeptide is Phospho-N-acetylmuramoyl-pentapeptide-transferase (Wolbachia pipientis wMel).